Consider the following 266-residue polypeptide: tRNA dimethylallyltransferase (266 aa).

Belongs to the IPP transferase family. As to quaternary structure, monomer. Requires Mg(2+) as cofactor.

The enzyme catalyses adenosine(37) in tRNA + dimethylallyl diphosphate = N(6)-dimethylallyladenosine(37) in tRNA + diphosphate. Functionally, catalyzes the transfer of a dimethylallyl group onto the adenine at position 37 in tRNAs that read codons beginning with uridine, leading to the formation of N6-(dimethylallyl)adenosine (i(6)A). This is tRNA dimethylallyltransferase (miaA) from Helicobacter acinonychis (strain Sheeba).